Reading from the N-terminus, the 176-residue chain is Translation initiation factor IF-3 (176 aa).

Belongs to the IF-3 family. In terms of assembly, monomer.

It is found in the cytoplasm. In terms of biological role, IF-3 binds to the 30S ribosomal subunit and shifts the equilibrium between 70S ribosomes and their 50S and 30S subunits in favor of the free subunits, thus enhancing the availability of 30S subunits on which protein synthesis initiation begins. The sequence is that of Translation initiation factor IF-3 from Streptococcus pyogenes serotype M4 (strain MGAS10750).